A 408-amino-acid chain; its full sequence is MKNQSEINIGLVGHVDHGKTTLTKALSGVWTDTHSEETKRGISIRLGYADITFRKCPQCEAPMCYTTAEICERCGTETELLRKVSFVDAPGHETLMATMLSGAALMDGAILVIAANEPCPQPQTKEHLMALDVIGVKDVIVVQNKIDIVSKERALESYREIKEFVKGTCAEDAPIIPVSAQQGANIDILIETIEERIKTPKRDVDKPARMYVARSFDINKPGADPEHLAGGVIGGSLVQGRLRVGDEIEIRPGIQVKKDGKQTWMSLHSTITGLVAGGEEMEEVGPGGLVGVGTLLDPALTKADSLSGSVAGEPGTLPPVRHSFTMETHLLERVVGTKEETKVEPIKTGEPLMINVGTTTTVGVVKSARADDADVVLKLPACAEEGQRIALSRRVGARWRLIGYGIIK.

Residues 4 to 201 enclose the tr-type G domain; it reads QSEINIGLVG…TIEERIKTPK (198 aa). Positions 13–20 are G1; sequence GHVDHGKT. Residues Asp-16, Thr-20, Gly-41, and Ser-43 each contribute to the Mg(2+) site. A GTP-binding site is contributed by 16–21; that stretch reads DHGKTT. The tract at residues 41–45 is G2; sequence GISIR. Positions 56, 59, 71, and 74 each coordinate Zn(2+). Residues 88 to 91 are G3; sequence DAPG. GTP-binding positions include 144–147 and 179–181; these read NKID and SAQ. Residues 144-147 form a G4 region; that stretch reads NKID. Residues 179–181 are G5; the sequence is SAQ.

Belongs to the TRAFAC class translation factor GTPase superfamily. Classic translation factor GTPase family. EIF2G subfamily. In terms of assembly, heterotrimer composed of an alpha, a beta and a gamma chain. It depends on Mg(2+) as a cofactor.

It carries out the reaction GTP + H2O = GDP + phosphate + H(+). In terms of biological role, eIF-2 functions in the early steps of protein synthesis by forming a ternary complex with GTP and initiator tRNA. In Methanothermobacter thermautotrophicus (strain ATCC 29096 / DSM 1053 / JCM 10044 / NBRC 100330 / Delta H) (Methanobacterium thermoautotrophicum), this protein is Translation initiation factor 2 subunit gamma.